We begin with the raw amino-acid sequence, 180 residues long: Adenine phosphoribosyltransferase (180 aa).

It belongs to the purine/pyrimidine phosphoribosyltransferase family. In terms of assembly, homodimer.

Its subcellular location is the cytoplasm. It carries out the reaction AMP + diphosphate = 5-phospho-alpha-D-ribose 1-diphosphate + adenine. It functions in the pathway purine metabolism; AMP biosynthesis via salvage pathway; AMP from adenine: step 1/1. Functionally, catalyzes a salvage reaction resulting in the formation of AMP, that is energically less costly than de novo synthesis. The polypeptide is Adenine phosphoribosyltransferase (Mycobacterium avium (strain 104)).